A 206-amino-acid polypeptide reads, in one-letter code: Protein-methionine-sulfoxide reductase heme-binding subunit MsrQ (206 aa).

The next 4 helical transmembrane spans lie at 8 to 28, 82 to 102, 116 to 136, and 153 to 173; these read IVWL…WLVW, LWCF…ELGI, PYLT…LTST, and FVYL…KILS.

This sequence belongs to the MsrQ family. As to quaternary structure, heterodimer of a catalytic subunit (MsrP) and a heme-binding subunit (MsrQ). FMN is required as a cofactor. Requires heme b as cofactor.

The protein localises to the cell inner membrane. Functionally, part of the MsrPQ system that repairs oxidized periplasmic proteins containing methionine sulfoxide residues (Met-O), using respiratory chain electrons. Thus protects these proteins from oxidative-stress damage caused by reactive species of oxygen and chlorine generated by the host defense mechanisms. MsrPQ is essential for the maintenance of envelope integrity under bleach stress, rescuing a wide series of structurally unrelated periplasmic proteins from methionine oxidation. MsrQ provides electrons for reduction to the reductase catalytic subunit MsrP, using the quinone pool of the respiratory chain. The polypeptide is Protein-methionine-sulfoxide reductase heme-binding subunit MsrQ (Citrobacter koseri (strain ATCC BAA-895 / CDC 4225-83 / SGSC4696)).